The following is a 472-amino-acid chain: Methanethiol oxidase (472 aa).

Ala-2 carries the N-acetylalanine modification. Residues Ser-111, Ser-371, and Ser-467 each carry the phosphoserine modification.

Belongs to the selenium-binding protein family. In terms of assembly, interacts with USP33. In terms of processing, phosphorylated. Post-translationally, the N-terminus is blocked. As to expression, widely expressed. Highly expressed in liver, lung, colon, prostate, kidney and pancreas. In brain, present both in neurons and glia (at protein level). Down-regulated in lung adenocarcinoma, colorectal carcinoma and ovarian cancer. Two-fold up-regulated in brain and blood from schizophrenia patients.

It localises to the nucleus. The protein resides in the cytoplasm. Its subcellular location is the cytosol. It is found in the membrane. The enzyme catalyses methanethiol + O2 + H2O = hydrogen sulfide + formaldehyde + H2O2 + H(+). The protein operates within organosulfur degradation. Functionally, catalyzes the oxidation of methanethiol, an organosulfur compound known to be produced in substantial amounts by gut bacteria. Selenium-binding protein which may be involved in the sensing of reactive xenobiotics in the cytoplasm. May be involved in intra-Golgi protein transport. The polypeptide is Methanethiol oxidase (SELENBP1) (Homo sapiens (Human)).